The sequence spans 293 residues: Probable E3 ubiquitin-protein ligase RNF144A-B (293 aa).

Residues 16-237 (PLLSCKLCLG…YDKGPCRNKL (222 aa)) form a TRIAD supradomain region. The Zn(2+) site is built by Cys20, Cys23, Cys43, Cys46, Cys111, Cys116, Cys135, Cys138, Cys143, Cys146, His151, Cys156, Cys186, and Cys189. The segment at 20 to 70 (CKLCLGEFPLEQMTTISQCQCIFCSLCLKQYVELLIKEGLETAISCPDSAC) adopts an RING-type 1 zinc-finger fold. The IBR-type zinc finger occupies 91–156 (QHYKRLQFER…RADCHTGQAC (66 aa)). An RING-type 2; atypical zinc finger spans residues 186–215 (CPKCKVYIERDEGCAQMMCKNCKHAFCWYC). Cys199 is a catalytic residue. Positions 204, 207, 212, 215, 227, and 233 each coordinate Zn(2+). Residues 251 to 271 (VVGIFAGFGLLLLVASPFLLL) form a helical membrane-spanning segment.

Belongs to the RBR family. RNF144 subfamily.

The protein localises to the membrane. The catalysed reaction is [E2 ubiquitin-conjugating enzyme]-S-ubiquitinyl-L-cysteine + [acceptor protein]-L-lysine = [E2 ubiquitin-conjugating enzyme]-L-cysteine + [acceptor protein]-N(6)-ubiquitinyl-L-lysine.. The protein operates within protein modification; protein ubiquitination. Its function is as follows. E3 ubiquitin-protein ligase which accepts ubiquitin from E2 ubiquitin-conjugating enzymes ube2l3 and ube2l6 in the form of a thioester and then directly transfers the ubiquitin to targeted substrates. The protein is Probable E3 ubiquitin-protein ligase RNF144A-B (rnf144ab) of Danio rerio (Zebrafish).